The sequence spans 188 residues: ATP synthase subunit b (188 aa).

The chain crosses the membrane as a helical span at residues 19-39; it reads VYVLGATIVSFLVLFLFITYF.

It belongs to the ATPase B chain family. As to quaternary structure, F-type ATPases have 2 components, F(1) - the catalytic core - and F(0) - the membrane proton channel. F(1) has five subunits: alpha(3), beta(3), gamma(1), delta(1), epsilon(1). F(0) has three main subunits: a(1), b(2) and c(10-14). The alpha and beta chains form an alternating ring which encloses part of the gamma chain. F(1) is attached to F(0) by a central stalk formed by the gamma and epsilon chains, while a peripheral stalk is formed by the delta and b chains.

It is found in the cell membrane. Its function is as follows. F(1)F(0) ATP synthase produces ATP from ADP in the presence of a proton or sodium gradient. F-type ATPases consist of two structural domains, F(1) containing the extramembraneous catalytic core and F(0) containing the membrane proton channel, linked together by a central stalk and a peripheral stalk. During catalysis, ATP synthesis in the catalytic domain of F(1) is coupled via a rotary mechanism of the central stalk subunits to proton translocation. Component of the F(0) channel, it forms part of the peripheral stalk, linking F(1) to F(0). The protein is ATP synthase subunit b of Mesomycoplasma hyopneumoniae (strain 7448) (Mycoplasma hyopneumoniae).